A 94-amino-acid polypeptide reads, in one-letter code: Co-chaperonin GroES (94 aa).

Belongs to the GroES chaperonin family. Heptamer of 7 subunits arranged in a ring. Interacts with the chaperonin GroEL.

It is found in the cytoplasm. Functionally, together with the chaperonin GroEL, plays an essential role in assisting protein folding. The GroEL-GroES system forms a nano-cage that allows encapsulation of the non-native substrate proteins and provides a physical environment optimized to promote and accelerate protein folding. GroES binds to the apical surface of the GroEL ring, thereby capping the opening of the GroEL channel. This Ligilactobacillus salivarius (strain UCC118) (Lactobacillus salivarius) protein is Co-chaperonin GroES.